We begin with the raw amino-acid sequence, 1832 residues long: Putative transcription factor capicua (1832 aa).

Phosphoserine occurs at positions 41 and 49. 15 disordered regions span residues 66 to 121 (ANQS…EVGS), 135 to 227 (STVG…AHPH), 323 to 353 (QQQQ…NHNN), 389 to 427 (NQRQ…AAMR), 444 to 493 (DGAA…IRRP), 563 to 619 (DRRK…GGQG), 690 to 739 (RERV…SGGE), 784 to 845 (QPTG…VSAP), 874 to 938 (PMHH…EDDE), 1069 to 1105 (TSTL…TISC), 1151 to 1178 (GQDE…EQVT), 1457 to 1602 (DGGM…STAA), 1632 to 1668 (QPED…VQKL), 1701 to 1733 (LESS…HRKV), and 1789 to 1817 (ASCT…SSTS). Over residues 96-121 (NANNNSSNNNTSSSNNNNNSNWEVGS) the composition is skewed to low complexity. Positions 172-186 (PPPPPPASLPAPSAP) are enriched in pro residues. Low complexity-rich tracts occupy residues 187–203 (PTSG…HATS), 211–223 (QQQH…HQQQ), and 323–342 (QQQQ…QQQQ). Over residues 397–408 (EEPDDQLDDDVF) the composition is skewed to acidic residues. Residues 409-422 (ETTTPGISANSKKQ) show a composition bias toward polar residues. Positions 446-484 (AAGAPATSAAKRRSQSLSALQQQQQQQQQAGAAGTAAGQ) are enriched in low complexity. The segment at residues 490 to 558 (IRRPMNAFMI…AHFKLHPEWK (69 aa)) is a DNA-binding region (HMG box). Residues 610-619 (GGSGSCGGQG) are compositionally biased toward gly residues. The tract at residues 834–1832 (GSASGGGVVS…TSAADVFQYY (999 aa)) is interaction with gro. Over residues 903-914 (ESSEKDKPALDD) the composition is skewed to basic and acidic residues. A compositionally biased stretch (acidic residues) spans 915–938 (QERDEVEEEDEDEEDDDEDDEDDE). Over residues 1078–1091 (NPANNEAPNKFSNF) the composition is skewed to polar residues. The span at 1092 to 1105 (PTQHQPTTTTTISC) shows a compositional bias: low complexity. Positions 1462–1471 (GCASAAASGG) are enriched in low complexity. Residues 1503–1525 (LSQSKSESNVSFGANLGASNGQH) are compositionally biased toward polar residues. A compositionally biased stretch (low complexity) spans 1547–1589 (NSSNLSSALPTPTSSTTTPNSDEQLPLTPTTSSSNSNLNQQQP). The residue at position 1716 (Thr1716) is a Phosphothreonine. Residues 1724 to 1733 (DASEKGHRKV) show a composition bias toward basic and acidic residues. The span at 1789 to 1799 (ASCTPHSAGPN) shows a compositional bias: polar residues. A compositionally biased stretch (low complexity) spans 1800-1817 (TPSDSNSSSTTLSASSTS).

As to quaternary structure, interacts with gro. In terms of tissue distribution, expressed in the central region of embryos. Also expressed in ovarian follicle cells, the wing imaginal disks and the wing pouch.

It is found in the nucleus. In terms of biological role, transcriptional repressor required for the specification of numerous cell types during embryonic development. Required for terminal patterning of early embryos. May associate with gro to repress tll and hkb, restricting their expression to embryonic terminal poles where they initiate correct development of head and tail structures. Required for dorsoventral patterning of oocytes and early embryos. Cooperates with dl to repress zen and other dorsal specific genes within the embryo and promotes expression of the ventralizing factor pip in ovarian follicle cells. Required during wing development for the specification of intervein areas, where it mediates localized repression of vein specific genes such as aos, dpp and vvl. In Drosophila melanogaster (Fruit fly), this protein is Putative transcription factor capicua (cic).